The primary structure comprises 283 residues: Thymidylate synthase (283 aa).

Arginine 33 lines the dUMP pocket. Histidine 63 provides a ligand contact to (6R)-5,10-methylene-5,6,7,8-tetrahydrofolate. 138–139 (RR) is a binding site for dUMP. Catalysis depends on cysteine 158, which acts as the Nucleophile. DUMP contacts are provided by residues 185-188 (RSAD), asparagine 196, and 226-228 (HIY). Residue aspartate 188 participates in (6R)-5,10-methylene-5,6,7,8-tetrahydrofolate binding. Alanine 282 serves as a coordination point for (6R)-5,10-methylene-5,6,7,8-tetrahydrofolate.

It belongs to the thymidylate synthase family. Bacterial-type ThyA subfamily. As to quaternary structure, homodimer.

The protein localises to the cytoplasm. The enzyme catalyses dUMP + (6R)-5,10-methylene-5,6,7,8-tetrahydrofolate = 7,8-dihydrofolate + dTMP. The protein operates within pyrimidine metabolism; dTTP biosynthesis. Functionally, catalyzes the reductive methylation of 2'-deoxyuridine-5'-monophosphate (dUMP) to 2'-deoxythymidine-5'-monophosphate (dTMP) while utilizing 5,10-methylenetetrahydrofolate (mTHF) as the methyl donor and reductant in the reaction, yielding dihydrofolate (DHF) as a by-product. This enzymatic reaction provides an intracellular de novo source of dTMP, an essential precursor for DNA biosynthesis. This is Thymidylate synthase from Methylibium petroleiphilum (strain ATCC BAA-1232 / LMG 22953 / PM1).